A 161-amino-acid chain; its full sequence is MFASRLAALGLLLLALVLDGKPAPPPQPLRKAPAGGTTALQRQLTEQQQQQQQAEGSSGPAAGGGGGRSGSKTANAAPTAPKSKGAAASAASRLLRDLRPDGKQSRAAWGRMVHPEHHAGGGGGGGGGGSRRLKGLPKKGLGSGCFGLKLDRIGSMSGLGC.

The signal sequence occupies residues 1–22; that stretch reads MFASRLAALGLLLLALVLDGKP. Residues 19-135 are disordered; the sequence is DGKPAPPPQP…GGGGSRRLKG (117 aa). A propeptide spanning residues 23–139 is cleaved from the precursor; it reads APPPQPLRKA…SRRLKGLPKK (117 aa). Low complexity-rich tracts occupy residues 29–60 and 76–93; these read LRKA…SSGP and AAPT…AASR. A compositionally biased stretch (basic and acidic residues) spans 94–104; that stretch reads LLRDLRPDGKQ. A compositionally biased stretch (gly residues) spans 120–130; that stretch reads GGGGGGGGGGS. Cys-145 and Cys-161 are joined by a disulfide.

Belongs to the natriuretic peptide family. As to expression, expressed by the venom gland.

Its subcellular location is the secreted. Its function is as follows. Snake venom natriuretic peptide that has a vasorelaxant activity in rat aortic strips and a diuretic potency in anesthetized rats. May act by activating natriuretic receptors (NPR1 and/or NPR2). This is C-type natriuretic peptide from Rhabdophis tigrinus tigrinus (Tiger keelback snake).